Here is a 339-residue protein sequence, read N- to C-terminus: Exopolyphosphatase 1 (339 aa).

The interval 315 to 339 (QTSVRDTRGQEVDRNAANRSRGDKT) is disordered. Residues 319 to 339 (RDTRGQEVDRNAANRSRGDKT) show a composition bias toward basic and acidic residues.

The protein belongs to the GppA/Ppx family. Homodimer.

It carries out the reaction [phosphate](n) + H2O = [phosphate](n-1) + phosphate + H(+). In terms of biological role, degradation of inorganic polyphosphates (polyP). Releases orthophosphate processively from the ends of the polyP chain. In Mycobacterium leprae (strain TN), this protein is Exopolyphosphatase 1.